Reading from the N-terminus, the 82-residue chain is Cytochrome b-c1 complex subunit 8 (82 aa).

Residues 1–43 (MGREFGNLARIRHVISYSLSPFEQRAFPSYFSKGIPNVLRRTR) are Mitochondrial matrix-facing. S16 is modified (phosphoserine). K33 carries the post-translational modification N6-acetyllysine; alternate. K33 bears the N6-succinyllysine; alternate mark. Residues 44 to 62 (ERILRVAPPFVVVYLIYTW) traverse the membrane as a helical segment. The Mitochondrial intermembrane segment spans residues 63–82 (GNQEFEQSKRKNPAMYENDK).

This sequence belongs to the UQCRQ/QCR8 family. Component of the ubiquinol-cytochrome c oxidoreductase (cytochrome b-c1 complex, complex III, CIII), a multisubunit enzyme composed of 11 subunits. The complex is composed of 3 respiratory subunits cytochrome b, cytochrome c1 and Rieske protein UQCRFS1, 2 core protein subunits UQCRC1/QCR1 and UQCRC2/QCR2, and 6 low-molecular weight protein subunits UQCRH/QCR6, UQCRB/QCR7, UQCRQ/QCR8, UQCR10/QCR9, UQCR11/QCR10 and subunit 9, the cleavage product of Rieske protein UQCRFS1. The complex exists as an obligatory dimer and forms supercomplexes (SCs) in the inner mitochondrial membrane with NADH-ubiquinone oxidoreductase (complex I, CI) and cytochrome c oxidase (complex IV, CIV), resulting in different assemblies (supercomplex SCI(1)III(2)IV(1) and megacomplex MCI(2)III(2)IV(2)). Interacts with UQCC6.

It is found in the mitochondrion inner membrane. Functionally, component of the ubiquinol-cytochrome c oxidoreductase, a multisubunit transmembrane complex that is part of the mitochondrial electron transport chain which drives oxidative phosphorylation. The respiratory chain contains 3 multisubunit complexes succinate dehydrogenase (complex II, CII), ubiquinol-cytochrome c oxidoreductase (cytochrome b-c1 complex, complex III, CIII) and cytochrome c oxidase (complex IV, CIV), that cooperate to transfer electrons derived from NADH and succinate to molecular oxygen, creating an electrochemical gradient over the inner membrane that drives transmembrane transport and the ATP synthase. The cytochrome b-c1 complex catalyzes electron transfer from ubiquinol to cytochrome c, linking this redox reaction to translocation of protons across the mitochondrial inner membrane, with protons being carried across the membrane as hydrogens on the quinol. In the process called Q cycle, 2 protons are consumed from the matrix, 4 protons are released into the intermembrane space and 2 electrons are passed to cytochrome c. The sequence is that of Cytochrome b-c1 complex subunit 8 (Uqcrq) from Mus musculus (Mouse).